A 506-amino-acid polypeptide reads, in one-letter code: Maturase K (506 aa).

Belongs to the intron maturase 2 family. MatK subfamily.

It is found in the plastid. The protein localises to the chloroplast. Usually encoded in the trnK tRNA gene intron. Probably assists in splicing its own and other chloroplast group II introns. The sequence is that of Maturase K from Trifolium microcephalum (Small-head clover).